We begin with the raw amino-acid sequence, 5255 residues long: Bacitracin synthase 1 (5255 aa).

The tract at residues Leu-39 to Ala-612 is domain 1 (isoleucine-activating). The span at Val-519–Ala-531 shows a compositional bias: basic and acidic residues. The segment at Val-519–Asn-542 is disordered. A Carrier 1 domain is found at Ala-539 to His-614. Position 574 is an O-(pantetheine 4'-phosphoryl)serine (Ser-574). The cyclization stretch occupies residues Thr-621–Phe-1037. Residues His-1109–Asp-1648 are domain 2 (cysteine-activating). Carrier domains lie at Leu-1580–Glu-1655, Ala-2616–Arg-2691, Pro-3659–Thr-3733, and Ala-5166–Glu-5241. O-(pantetheine 4'-phosphoryl)serine occurs at positions 1615, 2651, 3694, and 5201. Positions Gly-2124–Arg-2689 are domain 3 (leucine-activating). Positions Asp-3164–Glu-3732 are domain 4 (glutamine-activating). The tract at residues Leu-4668–Glu-5249 is domain 5 (isoleucine-activating).

The protein belongs to the ATP-dependent AMP-binding enzyme family. As to quaternary structure, large multienzyme complex of BA1, BA2 and BA3. Pantetheine 4'-phosphate is required as a cofactor.

The catalysed reaction is L-glutamate = D-glutamate. The protein operates within antibiotic biosynthesis; bacitracin biosynthesis. In terms of biological role, activates five amino acids, incorporates two D-amino acids, releases and cyclizes the mature bacitracin. The polypeptide is Bacitracin synthase 1 (bacA) (Bacillus licheniformis).